The chain runs to 178 residues: Large ribosomal subunit protein uL6 (178 aa).

It belongs to the universal ribosomal protein uL6 family. Part of the 50S ribosomal subunit.

Functionally, this protein binds to the 23S rRNA, and is important in its secondary structure. It is located near the subunit interface in the base of the L7/L12 stalk, and near the tRNA binding site of the peptidyltransferase center. The chain is Large ribosomal subunit protein uL6 from Methanobrevibacter smithii (strain ATCC 35061 / DSM 861 / OCM 144 / PS).